A 345-amino-acid polypeptide reads, in one-letter code: MASLENPAIDSSSEFESSSEEISSSKESKPKEAPVTVPSTKTLNSPSAAVAVSDDSESEKQSFVLTRRKKKEGAAESPAVKSGKKEGAAESPAVKSGNNEGATESPAVKSGKKRASEGTTSRDMHVKRIKKEGDNKKGHAQRVWSEEDEISLLQAMIDFKAETGTSPWDHKDRFFDIAKKSISFDVSKVQFFDKIRSFKRKYFGDRKVRSVESDHDKKCLGLAVSFWGSDGVSLETPVKKKVKDESVLVKANSKEKNVKPLVKEDEQVVILGEDSEWFEESFLVPVIASLGLDEYSVKKKWSKVSVETKKRIQEKMKLVDAKKCELLLANMDVLKEVTSVLTQTN.

Positions 1 to 145 (MASLENPAID…KKGHAQRVWS (145 aa)) are disordered. Positions 11-22 (SSSEFESSSEEI) are enriched in low complexity. Residues 23 to 32 (SSSKESKPKE) are compositionally biased toward basic and acidic residues. Residues 37–46 (VPSTKTLNSP) show a composition bias toward polar residues. A Phosphoserine modification is found at Ser105. Over residues 114–137 (RASEGTTSRDMHVKRIKKEGDNKK) the composition is skewed to basic and acidic residues.

Belongs to the GeBP family. In terms of tissue distribution, expressed strongly in leaves and flowers, weakly in roots, and very weakly in stems.

The protein resides in the nucleus. Transcription repressor that binds DNA in a sequence-specific manner, 5'-GCCT-3', to regulate the expression of PGR. Acts as a modulatory component for the glucose-triggered developmental leaf growth process. This chain is Transcription factor STKL1, found in Arabidopsis thaliana (Mouse-ear cress).